The following is a 615-amino-acid chain: Dihydroxy-acid dehydratase (615 aa).

Asp81 contributes to the Mg(2+) binding site. Cys122 lines the [2Fe-2S] cluster pocket. Mg(2+)-binding residues include Asp123 and Lys124. Lys124 bears the N6-carboxylysine mark. [2Fe-2S] cluster is bound at residue Cys193. Residue Glu489 coordinates Mg(2+). Ser515 functions as the Proton acceptor in the catalytic mechanism.

The protein belongs to the IlvD/Edd family. In terms of assembly, homodimer. Requires [2Fe-2S] cluster as cofactor. Mg(2+) is required as a cofactor.

It catalyses the reaction (2R)-2,3-dihydroxy-3-methylbutanoate = 3-methyl-2-oxobutanoate + H2O. It carries out the reaction (2R,3R)-2,3-dihydroxy-3-methylpentanoate = (S)-3-methyl-2-oxopentanoate + H2O. The protein operates within amino-acid biosynthesis; L-isoleucine biosynthesis; L-isoleucine from 2-oxobutanoate: step 3/4. It participates in amino-acid biosynthesis; L-valine biosynthesis; L-valine from pyruvate: step 3/4. Its function is as follows. Functions in the biosynthesis of branched-chain amino acids. Catalyzes the dehydration of (2R,3R)-2,3-dihydroxy-3-methylpentanoate (2,3-dihydroxy-3-methylvalerate) into 2-oxo-3-methylpentanoate (2-oxo-3-methylvalerate) and of (2R)-2,3-dihydroxy-3-methylbutanoate (2,3-dihydroxyisovalerate) into 2-oxo-3-methylbutanoate (2-oxoisovalerate), the penultimate precursor to L-isoleucine and L-valine, respectively. The polypeptide is Dihydroxy-acid dehydratase (Pseudomonas syringae pv. syringae (strain B728a)).